The chain runs to 1250 residues: Phospholipid-transporting ATPase IC (1250 aa).

Acidic residues-rich tracts occupy residues 1-13 (MDTD…EDDS) and 24-40 (SDDE…TDEP). The tract at residues 1-52 (MDTDYESTYEDDSQVPNDDVVPYSDDETDDELDSPQTDEPEQNRRNVQAEQS) is disordered. Residues 1 to 133 (MDTDYESTYE…VLLILQTIPQ (133 aa)) lie on the Cytoplasmic side of the membrane. The helical transmembrane segment at 134 to 154 (ISTVTWSTTLIPLLLVLGITA) threads the bilayer. The Exoplasmic loop portion of the chain corresponds to 155-338 (IKDLVDDIAR…TKIDYLMNYM (184 aa)). A helical membrane pass occupies residues 339 to 359 (VYTIFVLLILAAAGLAIGQTF). The Cytoplasmic portion of the chain corresponds to 360-385 (WEAKLGAANVSWYLYDGNNYSPSYRG). A helical transmembrane segment spans residues 386–406 (FLAFWGYIIVLNTMVPISLYV). Residues 407-956 (SVEVIRLGQS…KFLRYFFYKN (550 aa)) lie on the Exoplasmic loop side of the membrane. D454 acts as the 4-aspartylphosphate intermediate in catalysis. D454, K455, T456, E553, F594, K617, R650, T730, G731, D732, R865, and K871 together coordinate ATP. Residue D454 participates in Mg(2+) binding. T456 lines the Mg(2+) pocket. D891 provides a ligand contact to Mg(2+). Positions 894 and 895 each coordinate ATP. Residue D895 coordinates Mg(2+). A helical transmembrane segment spans residues 957-977 (FSFTLVHFWYSFFNGFSAQTV). Over 978–980 (YED) the chain is Cytoplasmic. The helical transmembrane segment at 981-1001 (WFITLYNVLYSSLPVLLVGLL) threads the bilayer. The Exoplasmic loop portion of the chain corresponds to 1002 to 1034 (DQDVSDKLSLAFPRLYVPGQKDLLFNYKKFFLS). Residues 1035-1055 (LFHGIVTSLIIFFIPYGAFLL) form a helical membrane-spanning segment. The Cytoplasmic portion of the chain corresponds to 1056-1069 (TMGQDGEAPSDYQS). A helical transmembrane segment spans residues 1070 to 1090 (FAVTTATALVITVNFQIGLDT). The Exoplasmic loop portion of the chain corresponds to 1091–1092 (SY). Residues 1093 to 1113 (WTFVNAFSIFGSIAIYFGIMF) form a helical membrane-spanning segment. The Cytoplasmic segment spans residues 1114 to 1117 (DLHS). Residues 1118 to 1138 (AGIHVLFPSMFIFTGAAPNAL) traverse the membrane as a helical segment. Residues 1139–1140 (RQ) lie on the Exoplasmic loop side of the membrane. A helical membrane pass occupies residues 1141-1161 (PYLWLTIILTVAFCLLPIVAL). The Cytoplasmic portion of the chain corresponds to 1162–1250 (RFLAKTIWPS…AQITHFTPQT (89 aa)).

It belongs to the cation transport ATPase (P-type) (TC 3.A.3) family. Type IV subfamily. As to quaternary structure, component of a P4-ATPase flippase complex which consists of a catalytic alpha subunit and an accessory beta subunit. The flippase ATP8B1:TMEM30A complex can form an intermediate phosphoenzyme in vitro. Also interacts with beta subunit TMEM30B. Mg(2+) serves as cofactor.

It is found in the cell membrane. Its subcellular location is the apical cell membrane. The protein resides in the cell projection. The protein localises to the stereocilium. It localises to the endoplasmic reticulum. It is found in the golgi apparatus. It carries out the reaction ATP + H2O + phospholipidSide 1 = ADP + phosphate + phospholipidSide 2.. The enzyme catalyses a 1,2-diacyl-sn-glycero-3-phospho-L-serine(out) + ATP + H2O = a 1,2-diacyl-sn-glycero-3-phospho-L-serine(in) + ADP + phosphate + H(+). Catalytic component of a P4-ATPase flippase complex which catalyzes the hydrolysis of ATP coupled to the transport of aminophospholipids from the outer to the inner leaflet of various membranes and ensures the maintenance of asymmetric distribution of phospholipids. Phospholipid translocation also seems to be implicated in vesicle formation and in uptake of lipid signaling molecules. May also participate in the establishment of the canalicular membrane integrity by ensuring asymmetric distribution of phospholipids in the canicular membrane. In Xenopus tropicalis (Western clawed frog), this protein is Phospholipid-transporting ATPase IC (atp8b1).